A 359-amino-acid chain; its full sequence is Peptide chain release factor 1 (359 aa).

The residue at position 235 (Q235) is an N5-methylglutamine.

This sequence belongs to the prokaryotic/mitochondrial release factor family. Post-translationally, methylated by PrmC. Methylation increases the termination efficiency of RF1.

It is found in the cytoplasm. Peptide chain release factor 1 directs the termination of translation in response to the peptide chain termination codons UAG and UAA. This is Peptide chain release factor 1 from Verminephrobacter eiseniae (strain EF01-2).